A 277-amino-acid polypeptide reads, in one-letter code: Ribosomal RNA small subunit methyltransferase G (277 aa).

S-adenosyl-L-methionine-binding positions include glycine 128, phenylalanine 133, 188–189 (SE), and arginine 198.

The protein belongs to the methyltransferase superfamily. RNA methyltransferase RsmG family.

The protein localises to the cytoplasm. The enzyme catalyses guanosine(527) in 16S rRNA + S-adenosyl-L-methionine = N(7)-methylguanosine(527) in 16S rRNA + S-adenosyl-L-homocysteine. In terms of biological role, specifically methylates the N7 position of guanine in position 527 of 16S rRNA. The chain is Ribosomal RNA small subunit methyltransferase G from Nitrobacter winogradskyi (strain ATCC 25391 / DSM 10237 / CIP 104748 / NCIMB 11846 / Nb-255).